A 562-amino-acid chain; its full sequence is IRK-interacting protein (562 aa).

2 disordered regions span residues 29-61 (ASLMQMKSSPSSNYSLRNPSSSSAASPASRPLP) and 303-322 (VVSQENSGGRSSGKKNSEMP). The span at 36–61 (SSPSSNYSLRNPSSSSAASPASRPLP) shows a compositional bias: low complexity. A coiled-coil region spans residues 246–306 (SGVEKLKREL…LREATEVVSQ (61 aa)).

As to quaternary structure, interacts with IRK. In terms of tissue distribution, highly expressed in root tips, shoot apices and developing flowers.

This chain is IRK-interacting protein, found in Arabidopsis thaliana (Mouse-ear cress).